The chain runs to 399 residues: Argininosuccinate synthase (399 aa).

ATP contacts are provided by residues 10–18 (AYSGGVDTS) and A38. Y89 contributes to the L-citrulline binding site. G119 provides a ligand contact to ATP. The L-aspartate site is built by T121, N125, and D126. Residue N125 participates in L-citrulline binding. L-citrulline is bound by residues R129, S177, S186, E262, and Y274.

The protein belongs to the argininosuccinate synthase family. Type 1 subfamily. In terms of assembly, homotetramer.

Its subcellular location is the cytoplasm. It carries out the reaction L-citrulline + L-aspartate + ATP = 2-(N(omega)-L-arginino)succinate + AMP + diphosphate + H(+). It functions in the pathway amino-acid biosynthesis; L-arginine biosynthesis; L-arginine from L-ornithine and carbamoyl phosphate: step 2/3. In Picosynechococcus sp. (strain ATCC 27264 / PCC 7002 / PR-6) (Agmenellum quadruplicatum), this protein is Argininosuccinate synthase.